Reading from the N-terminus, the 251-residue chain is HTH-type transcriptional regulator UlaR (251 aa).

The 56-residue stretch at glutamate 3–alanine 58 folds into the HTH deoR-type domain. Positions valine 20 to aspartate 39 form a DNA-binding region, H-T-H motif.

It localises to the cytoplasm. Functionally, represses ulaG and the ulaABCDEF operon. This is HTH-type transcriptional regulator UlaR from Shigella dysenteriae serotype 1 (strain Sd197).